Reading from the N-terminus, the 235-residue chain is UPF0758 protein A1S_2918 (235 aa).

A disordered region spans residues 1-20; it reads MNTSIKNWPEQERPRERLLQ. Basic and acidic residues predominate over residues 9-18; that stretch reads PEQERPRERL. Residues 105-227 enclose the MPN domain; sequence SLHSSHLVLD…SFSFAEQQLL (123 aa). 3 residues coordinate Zn(2+): His-176, His-178, and Asp-189. Positions 176 to 189 match the JAMM motif motif; that stretch reads HNHPFGSPQPSPED.

The protein belongs to the UPF0758 family.

The sequence is that of UPF0758 protein A1S_2918 from Acinetobacter baumannii (strain ATCC 17978 / DSM 105126 / CIP 53.77 / LMG 1025 / NCDC KC755 / 5377).